Reading from the N-terminus, the 122-residue chain is Large ribosomal subunit protein bL17 (122 aa).

Belongs to the bacterial ribosomal protein bL17 family. As to quaternary structure, part of the 50S ribosomal subunit. Contacts protein L32.

This is Large ribosomal subunit protein bL17 from Wigglesworthia glossinidia brevipalpis.